The chain runs to 367 residues: Alanine racemase (367 aa).

Lys40 serves as the catalytic Proton acceptor; specific for D-alanine. Lys40 bears the N6-(pyridoxal phosphate)lysine mark. Arg136 contacts substrate. Tyr263 acts as the Proton acceptor; specific for L-alanine in catalysis. Met310 serves as a coordination point for substrate.

This sequence belongs to the alanine racemase family. Pyridoxal 5'-phosphate serves as cofactor.

The enzyme catalyses L-alanine = D-alanine. It participates in amino-acid biosynthesis; D-alanine biosynthesis; D-alanine from L-alanine: step 1/1. Catalyzes the interconversion of L-alanine and D-alanine. May also act on other amino acids. This chain is Alanine racemase (alr), found in Streptococcus thermophilus (strain CNRZ 1066).